The sequence spans 320 residues: Probable cell division protein WhiA (320 aa).

The segment at residues 276–310 (TLKELGEMVESGKVSKSGVNHRLRKIDELAEKLRA) is a DNA-binding region (H-T-H motif).

Belongs to the WhiA family.

Functionally, involved in cell division and chromosome segregation. This Halalkalibacterium halodurans (strain ATCC BAA-125 / DSM 18197 / FERM 7344 / JCM 9153 / C-125) (Bacillus halodurans) protein is Probable cell division protein WhiA.